We begin with the raw amino-acid sequence, 388 residues long: Succinate--CoA ligase [ADP-forming] subunit beta (388 aa).

One can recognise an ATP-grasp domain in the interval Lys-9–His-244. Residues Lys-46, Gly-53 to Gly-55, Glu-99, Thr-102, and Glu-107 each bind ATP. Residues Asn-199 and Asp-213 each contribute to the Mg(2+) site. Substrate-binding positions include Asn-264 and Gly-321–Val-323.

Belongs to the succinate/malate CoA ligase beta subunit family. In terms of assembly, heterotetramer of two alpha and two beta subunits. The cofactor is Mg(2+).

It carries out the reaction succinate + ATP + CoA = succinyl-CoA + ADP + phosphate. The enzyme catalyses GTP + succinate + CoA = succinyl-CoA + GDP + phosphate. The protein operates within carbohydrate metabolism; tricarboxylic acid cycle; succinate from succinyl-CoA (ligase route): step 1/1. Succinyl-CoA synthetase functions in the citric acid cycle (TCA), coupling the hydrolysis of succinyl-CoA to the synthesis of either ATP or GTP and thus represents the only step of substrate-level phosphorylation in the TCA. The beta subunit provides nucleotide specificity of the enzyme and binds the substrate succinate, while the binding sites for coenzyme A and phosphate are found in the alpha subunit. This Marinomonas sp. (strain MWYL1) protein is Succinate--CoA ligase [ADP-forming] subunit beta.